The chain runs to 432 residues: Serine hydroxymethyltransferase 1 (432 aa).

(6S)-5,6,7,8-tetrahydrofolate-binding positions include L131 and 135 to 137 (GHL). The residue at position 240 (K240) is an N6-(pyridoxal phosphate)lysine.

Belongs to the SHMT family. Homodimer. It depends on pyridoxal 5'-phosphate as a cofactor.

Its subcellular location is the cytoplasm. It catalyses the reaction (6R)-5,10-methylene-5,6,7,8-tetrahydrofolate + glycine + H2O = (6S)-5,6,7,8-tetrahydrofolate + L-serine. The protein operates within one-carbon metabolism; tetrahydrofolate interconversion. Its pathway is amino-acid biosynthesis; glycine biosynthesis; glycine from L-serine: step 1/1. In terms of biological role, catalyzes the reversible interconversion of serine and glycine with tetrahydrofolate (THF) serving as the one-carbon carrier. This reaction serves as the major source of one-carbon groups required for the biosynthesis of purines, thymidylate, methionine, and other important biomolecules. Also exhibits THF-independent aldolase activity toward beta-hydroxyamino acids, producing glycine and aldehydes, via a retro-aldol mechanism. The sequence is that of Serine hydroxymethyltransferase 1 from Rhodopseudomonas palustris (strain ATCC BAA-98 / CGA009).